The following is a 379-amino-acid chain: Probable tRNA sulfurtransferase (379 aa).

The 106-residue stretch at 52 to 157 (DEFLDKLKFI…RHHAFVFCKI (106 aa)) folds into the THUMP domain. ATP is bound by residues 175-176 (LL), R257, G279, and Q288.

The protein belongs to the ThiI family.

It localises to the cytoplasm. The catalysed reaction is [ThiI sulfur-carrier protein]-S-sulfanyl-L-cysteine + a uridine in tRNA + 2 reduced [2Fe-2S]-[ferredoxin] + ATP + H(+) = [ThiI sulfur-carrier protein]-L-cysteine + a 4-thiouridine in tRNA + 2 oxidized [2Fe-2S]-[ferredoxin] + AMP + diphosphate. The enzyme catalyses [ThiS sulfur-carrier protein]-C-terminal Gly-Gly-AMP + S-sulfanyl-L-cysteinyl-[cysteine desulfurase] + AH2 = [ThiS sulfur-carrier protein]-C-terminal-Gly-aminoethanethioate + L-cysteinyl-[cysteine desulfurase] + A + AMP + 2 H(+). It functions in the pathway cofactor biosynthesis; thiamine diphosphate biosynthesis. Its function is as follows. Catalyzes the ATP-dependent transfer of a sulfur to tRNA to produce 4-thiouridine in position 8 of tRNAs, which functions as a near-UV photosensor. Also catalyzes the transfer of sulfur to the sulfur carrier protein ThiS, forming ThiS-thiocarboxylate. This is a step in the synthesis of thiazole, in the thiamine biosynthesis pathway. The sulfur is donated as persulfide by IscS. This chain is Probable tRNA sulfurtransferase, found in Mycoplasmopsis pulmonis (strain UAB CTIP) (Mycoplasma pulmonis).